The chain runs to 586 residues: Arginine--tRNA ligase (586 aa).

The 'HIGH' region motif lies at 131–141 (ANPTGPMHVGH).

It belongs to the class-I aminoacyl-tRNA synthetase family. As to quaternary structure, monomer.

Its subcellular location is the cytoplasm. It carries out the reaction tRNA(Arg) + L-arginine + ATP = L-arginyl-tRNA(Arg) + AMP + diphosphate. The chain is Arginine--tRNA ligase from Rhizobium rhizogenes (strain K84 / ATCC BAA-868) (Agrobacterium radiobacter).